The sequence spans 166 residues: Urease accessory protein UreE (166 aa).

This sequence belongs to the UreE family.

The protein localises to the cytoplasm. In terms of biological role, involved in urease metallocenter assembly. Binds nickel. Probably functions as a nickel donor during metallocenter assembly. This is Urease accessory protein UreE from Pseudomonas fluorescens (strain Pf0-1).